A 222-amino-acid chain; its full sequence is ATP-dependent Clp protease proteolytic subunit 1 (222 aa).

The Nucleophile role is filled by S121. The active site involves H146.

The protein belongs to the peptidase S14 family. As to quaternary structure, fourteen ClpP subunits assemble into 2 heptameric rings which stack back to back to give a disk-like structure with a central cavity, resembling the structure of eukaryotic proteasomes.

It is found in the cytoplasm. The enzyme catalyses Hydrolysis of proteins to small peptides in the presence of ATP and magnesium. alpha-casein is the usual test substrate. In the absence of ATP, only oligopeptides shorter than five residues are hydrolyzed (such as succinyl-Leu-Tyr-|-NHMec, and Leu-Tyr-Leu-|-Tyr-Trp, in which cleavage of the -Tyr-|-Leu- and -Tyr-|-Trp bonds also occurs).. Its function is as follows. Cleaves peptides in various proteins in a process that requires ATP hydrolysis. Has a chymotrypsin-like activity. Plays a major role in the degradation of misfolded proteins. The sequence is that of ATP-dependent Clp protease proteolytic subunit 1 from Thermobifida fusca (strain YX).